The chain runs to 581 residues: MTTKLQQLTQNILSSQGKLEADFILKNAQVADVYTLTWRKADIVVKNGTIVALDHSNRFHAKEVEDAAGSYVIPGLIDGHIHIESSMLTPGEFSRVLIPHGITTVITDPHEIANVAGAEGIQFMLDDAQKADMDIFVMLPSSVPGTQFENAGATLTAQDLEPFLHHEQVRGLAEVMDFPAVLNGEEGMLQKILLSKEANLVIDGHCAGLQSEQITGYRAAGIQTDHECVTAEEAIDRVEQGMYVLIREGSAAKNLRDLLPAIQSHNARRFGFCTDDKYVDELMDEGSINYDVAMAIAEGMTPLQAIQLATVNTAECYRLFDRGVLAPGYKADFVLVDDLSTMQAKAVWKNGHKVAENGEMLTSRQEAKVPAHIHHSVHLPSMTKDSLQLSFKKGTRANVMEIVPNQLITNHLVIDVPVKEGVFVPSIEQDLLKLAVIERHHHLHTTGLGIVKGFGLQKGAVATTVAHDSHNALVVGTNDEDMILALSRIQEIQGGFVIVADGEILAEMPLTIGGLMTDVPAQQAKEQLAGLHNALQKLNPTLDFHFLLTFSFVALPVIPALKLTDTGLFDVTTFQHIEVEA.

Belongs to the metallo-dependent hydrolases superfamily. Adenine deaminase family. Requires Mn(2+) as cofactor.

The catalysed reaction is adenine + H2O + H(+) = hypoxanthine + NH4(+). This is Adenine deaminase from Lysinibacillus sphaericus (strain C3-41).